A 635-amino-acid chain; its full sequence is Threonine--tRNA ligase (635 aa).

Residues 1 to 61 enclose the TGS domain; that stretch reads MIQITLPDSS…SQDSALSIVT (61 aa). The segment at 242–533 is catalytic; it reads DHRKLGKELD…LIEEHAGALP (292 aa). Zn(2+) contacts are provided by cysteine 333, histidine 384, and histidine 510.

The protein belongs to the class-II aminoacyl-tRNA synthetase family. Homodimer. Requires Zn(2+) as cofactor.

Its subcellular location is the cytoplasm. It carries out the reaction tRNA(Thr) + L-threonine + ATP = L-threonyl-tRNA(Thr) + AMP + diphosphate + H(+). Catalyzes the attachment of threonine to tRNA(Thr) in a two-step reaction: L-threonine is first activated by ATP to form Thr-AMP and then transferred to the acceptor end of tRNA(Thr). Also edits incorrectly charged L-seryl-tRNA(Thr). This is Threonine--tRNA ligase from Polaromonas naphthalenivorans (strain CJ2).